Consider the following 299-residue polypeptide: Acetylglutamate kinase (299 aa).

Substrate is bound by residues 62–63, Arg-84, and Asn-188; that span reads GG.

It belongs to the acetylglutamate kinase family. ArgB subfamily.

It is found in the cytoplasm. The catalysed reaction is N-acetyl-L-glutamate + ATP = N-acetyl-L-glutamyl 5-phosphate + ADP. It functions in the pathway amino-acid biosynthesis; L-arginine biosynthesis; N(2)-acetyl-L-ornithine from L-glutamate: step 2/4. Catalyzes the ATP-dependent phosphorylation of N-acetyl-L-glutamate. This chain is Acetylglutamate kinase, found in Methanosarcina acetivorans (strain ATCC 35395 / DSM 2834 / JCM 12185 / C2A).